Consider the following 614-residue polypeptide: RNA polymerase sigma factor RpoD (614 aa).

A disordered region spans residues 168-245 (DPDDNIAAPT…PEEKRSYPQG (78 aa)). Positions 193–209 (EADDDEEESEGGDDEEE) are enriched in acidic residues. Polar residues predominate over residues 215-232 (TRSSQPSVSVRYPSSFSD). The sigma-70 factor domain-2 stretch occupies residues 380-450 (MVEANLRLVI…TRSIADQART (71 aa)). The Interaction with polymerase core subunit RpoC motif lies at 404–407 (DLIQ). Residues 459-535 (ETINKLNRIS…DSTMQSPIYV (77 aa)) form a sigma-70 factor domain-3 region. The tract at residues 548-601 (VLSGLTAREAKVLRMRFGIDMNTDHTLEEVGKQFDVTRERIRQIEAKAWRKLRH) is sigma-70 factor domain-4. A DNA-binding region (H-T-H motif) is located at residues 574 to 593 (LEEVGKQFDVTRERIRQIEA).

This sequence belongs to the sigma-70 factor family. RpoD/SigA subfamily. In terms of assembly, interacts transiently with the RNA polymerase catalytic core.

It localises to the cytoplasm. In terms of biological role, sigma factors are initiation factors that promote the attachment of RNA polymerase to specific initiation sites and are then released. This sigma factor is the primary sigma factor during exponential growth. The chain is RNA polymerase sigma factor RpoD from Pseudomonas putida (Arthrobacter siderocapsulatus).